We begin with the raw amino-acid sequence, 1262 residues long: Isoleucine--tRNA ligase, cytoplasmic (1262 aa).

Methionine 1 bears the N-acetylmethionine mark. The 'HIGH' region motif lies at 48 to 58 (PFATGLPHYGH). The 'KMSKS' region signature appears at 600 to 604 (KMSKR). Lysine 603 lines the ATP pocket. Position 1049 is a phosphoserine (serine 1049). A Phosphothreonine modification is found at threonine 1058.

Belongs to the class-I aminoacyl-tRNA synthetase family. As to quaternary structure, part of a multisubunit complex that groups tRNA ligases for Arg (RARS1), Asp (DARS1), Gln (QARS1), Ile (IARS1), Leu (LARS1), Lys (KARS1), Met (MARS1) the bifunctional ligase for Glu and Pro (EPRS1) and the auxiliary subunits AIMP1/p43, AIMP2/p38 and EEF1E1/p18.

The protein resides in the cytoplasm. It localises to the cytosol. The catalysed reaction is tRNA(Ile) + L-isoleucine + ATP = L-isoleucyl-tRNA(Ile) + AMP + diphosphate. In terms of biological role, catalyzes the specific attachment of an amino acid to its cognate tRNA in a 2 step reaction: the amino acid (AA) is first activated by ATP to form AA-AMP and then transferred to the acceptor end of the tRNA. This is Isoleucine--tRNA ligase, cytoplasmic (Iars1) from Mus musculus (Mouse).